We begin with the raw amino-acid sequence, 416 residues long: Squamosa promoter-binding-like protein 8 (416 aa).

The disordered stretch occupies residues 11 to 51; that stretch reads SSCDDFGYNATPPPPPSLLPIMDQDGGGGSIQRDHHQHHNH. The SBP-type zinc-finger motif lies at 182-260; that stretch reads PPRCQAEGCK…ADHNRRRRKS (79 aa). Zn(2+)-binding residues include cysteine 185, cysteine 190, cysteine 207, histidine 210, cysteine 227, cysteine 230, histidine 234, and cysteine 246. Positions 243–259 match the Bipartite nuclear localization signal motif; it reads KKSCRKRLADHNRRRRK. The segment at 250-299 is disordered; it reads LADHNRRRRKSKPSDGEHSGEKRRAQANKSAATKDKAGSSSKNAGIGDGF. Positions 261–273 are enriched in basic and acidic residues; sequence KPSDGEHSGEKRR.

As to expression, expressed in stems, leaf sheaths, and young panicles. Weakly expressed in ligules, auricles, and leaf sheaths at the basal region.

It localises to the nucleus. In terms of biological role, probable transcription factor that plays an important role in building the laminar joint between leaf blade and leaf sheath boundary, thereby controlling ligule and auricle development. The protein is Squamosa promoter-binding-like protein 8 (SPL8) of Oryza sativa subsp. japonica (Rice).